The following is a 1835-amino-acid chain: Urea amidolyase (1835 aa).

Residues 122–129 (GAIIVGKT) and Lys747 contribute to the ATP site. Residues 632–1075 (LFDTVLIANR…STNILNSYQY (444 aa)) enclose the Biotin carboxylation domain. Residues 751 to 948 (RQIAQKAGVP…LVEWMIRIAA (198 aa)) enclose the ATP-grasp domain. Ser803 is subject to Phosphoserine. The ATP site is built by Glu830 and Asn865. The Biotinyl-binding domain maps to 1754–1832 (DEEEDFPEGA…DSGDIVAVIE (79 aa)). Position 1798 is an N6-biotinyllysine (Lys1798).

As to quaternary structure, monomer. Biotin is required as a cofactor.

The enzyme catalyses urea + hydrogencarbonate + ATP = urea-1-carboxylate + ADP + phosphate + H(+). It carries out the reaction urea-1-carboxylate + H2O + 3 H(+) = 2 NH4(+) + 2 CO2. It functions in the pathway nitrogen metabolism; urea degradation; CO(2) and NH(3) from urea (allophanate route): step 1/2. The protein operates within nitrogen metabolism; urea degradation; CO(2) and NH(3) from urea (allophanate route): step 2/2. Its function is as follows. Hydrolysis of urea to ammonia and CO(2). In Saccharomyces cerevisiae (strain ATCC 204508 / S288c) (Baker's yeast), this protein is Urea amidolyase (DUR1,2).